The following is a 211-amino-acid chain: FMN-dependent NADH:quinone oxidoreductase (211 aa).

Residue 17–19 (SYS) participates in FMN binding.

The protein belongs to the azoreductase type 1 family. Homodimer. FMN serves as cofactor.

It carries out the reaction 2 a quinone + NADH + H(+) = 2 a 1,4-benzosemiquinone + NAD(+). The catalysed reaction is N,N-dimethyl-1,4-phenylenediamine + anthranilate + 2 NAD(+) = 2-(4-dimethylaminophenyl)diazenylbenzoate + 2 NADH + 2 H(+). In terms of biological role, quinone reductase that provides resistance to thiol-specific stress caused by electrophilic quinones. Also exhibits azoreductase activity. Catalyzes the reductive cleavage of the azo bond in aromatic azo compounds to the corresponding amines. The chain is FMN-dependent NADH:quinone oxidoreductase from Bacillus pumilus (strain SAFR-032).